The chain runs to 444 residues: Transcriptional coactivator nsrH (444 aa).

The HTH iclR-type domain maps to 74–144; it reads ASQVSEILAC…ERDHVAHTPL (71 aa). Residues 104-123 constitute a DNA-binding region (H-T-H motif); that stretch reads IKDIADLTNVPESRLRRIIR.

It localises to the nucleus. Its function is as follows. Transcriptional coactivator; part of the gene cluster that mediates the biosynthesis of the tetrahydroxanthone dimer neosartorin, which exhibits antibacterial activity. The chain is Transcriptional coactivator nsrH from Aspergillus novofumigatus (strain IBT 16806).